We begin with the raw amino-acid sequence, 131 residues long: Synaptobrevin-like protein (131 aa).

Over 1–81 the chain is Cytoplasmic; sequence MLHITTMTDK…KRKFWWKNCK (81 aa). The region spanning 18–78 is the v-SNARE coiled-coil homology domain; the sequence is RLQQTQAQVN…GKLKRKFWWK (61 aa). The chain crosses the membrane as a helical; Anchor for type IV membrane protein span at residues 82–102; the sequence is MLAVLGVLVVILIIVLIVWVV. Topologically, residues 103 to 131 are vesicular; it reads SEQKNKVEQSEHSSHHLVMDNSSHLLSEQ. Residues 112 to 131 form a disordered region; the sequence is SEHSSHHLVMDNSSHLLSEQ. The segment covering 122-131 has biased composition (polar residues); it reads DNSSHLLSEQ.

This sequence belongs to the synaptobrevin family.

The protein resides in the cytoplasmic vesicle. It is found in the secretory vesicle. It localises to the synaptic vesicle membrane. Its subcellular location is the synapse. The protein localises to the synaptosome. Its function is as follows. Unknown, but synaptobrevins are presumed to be involved in targeting and fusion of synaptic vesicles with the presynaptic membrane as well as in neurotransmitter release. The protein is Synaptobrevin-like protein of Schistosoma mansoni (Blood fluke).